A 165-amino-acid chain; its full sequence is C-phycoerythrin class 2 subunit alpha (165 aa).

Residues Cys-75, Cys-83, and Cys-140 each coordinate phycourobilin.

The protein belongs to the phycobiliprotein family. In terms of assembly, heterodimer of an alpha and a beta chain. Contains three covalently linked phycourobilin chromophores.

Its subcellular location is the cellular thylakoid membrane. In terms of biological role, light-harvesting photosynthetic bile pigment-protein from the phycobiliprotein complex. This chain is C-phycoerythrin class 2 subunit alpha (mpeA), found in Synechococcus sp. (strain WH8103).